The primary structure comprises 503 residues: Plant-specific TFIIB-related protein 1 (503 aa).

Residues 1-33 (MKCPYCSSAQGRCTTTSSGRSITECSSCGRVME) form a TFIIB-type zinc finger. Disordered regions lie at residues 328–366 (PEKAFPTTTISTTRSTTPRAVDPPEPSFVEKDKPSAKPI), 411–431 (NAMDYEKQQLDKQQQQQLGDK), 436–455 (IYLRDHNPFPSNPSPSTGIS), and 468–503 (GSSSNLPVIHPPKLPPGYAEIRGSGSRNADNPHGDF). Low complexity predominate over residues 333–346 (PTTTISTTRSTTPR). Basic and acidic residues predominate over residues 355–366 (FVEKDKPSAKPI).

Ubiquinated. Subsequent degradation by the proteasome pathway. Widely expressed.

Its subcellular location is the plastid. The protein localises to the chloroplast outer membrane. It is found in the nucleus. Plant-specific TFIIB-related protein that may be involved in an intracellular signaling pathway between plastids and the nucleus. May act as general transcription factor (GTF) of RNA polymerase I-dependent transcription and rRNA synthesis. Forms a ternary complex with TBP2 and the rDNA promoter region. This is Plant-specific TFIIB-related protein 1 from Arabidopsis thaliana (Mouse-ear cress).